We begin with the raw amino-acid sequence, 103 residues long: Large ribosomal subunit protein bL21 (103 aa).

It belongs to the bacterial ribosomal protein bL21 family. As to quaternary structure, part of the 50S ribosomal subunit. Contacts protein L20.

In terms of biological role, this protein binds to 23S rRNA in the presence of protein L20. The protein is Large ribosomal subunit protein bL21 of Haemophilus ducreyi (strain 35000HP / ATCC 700724).